Here is a 166-residue protein sequence, read N- to C-terminus: Small ribosomal subunit protein uS5 (166 aa).

One can recognise an S5 DRBM domain in the interval 11–74 (LQEKLIAVNR…EKARRNMITV (64 aa)).

This sequence belongs to the universal ribosomal protein uS5 family. In terms of assembly, part of the 30S ribosomal subunit. Contacts proteins S4 and S8.

Its function is as follows. With S4 and S12 plays an important role in translational accuracy. In terms of biological role, located at the back of the 30S subunit body where it stabilizes the conformation of the head with respect to the body. This is Small ribosomal subunit protein uS5 from Histophilus somni (strain 2336) (Haemophilus somnus).